The chain runs to 362 residues: Putative RING-H2 finger protein ATL21B (362 aa).

Positions 1 to 23 are cleaved as a signal peptide; that stretch reads MIISKQLFLLFFLLFFIFPLRHA. A helical membrane pass occupies residues 234–254; the sequence is VVAVLICLSIIGAVILFVTCI. The RING-type; atypical zinc finger occupies 316–358; it reads CPICLSEYVSKETVRFIPECDHCFHAKCIDVWLKIHGSCPLCR.

It belongs to the RING-type zinc finger family. ATL subfamily.

It localises to the membrane. The catalysed reaction is S-ubiquitinyl-[E2 ubiquitin-conjugating enzyme]-L-cysteine + [acceptor protein]-L-lysine = [E2 ubiquitin-conjugating enzyme]-L-cysteine + N(6)-ubiquitinyl-[acceptor protein]-L-lysine.. It participates in protein modification; protein ubiquitination. The protein is Putative RING-H2 finger protein ATL21B (ATL21B) of Arabidopsis thaliana (Mouse-ear cress).